A 1200-amino-acid chain; its full sequence is Chromosome partition protein Smc (1200 aa).

32 to 39 (PNGCGKSN) serves as a coordination point for ATP. 2 coiled-coil regions span residues 171–219 (VTKY…AEKY) and 252–342 (LENL…MSEA). Residues 528–644 (QGIFGLVADV…QDVATARAWT (117 aa)) enclose the SMC hinge domain. 2 coiled-coil regions span residues 679–706 (ALQK…ILTR) and 735–762 (LASQ…LEVE). A disordered region spans residues 763–795 (EGQLTQSHQALEHEEEASRGEVAHGQADREGRE). Residues 772 to 795 (ALEHEEEASRGEVAHGQADREGRE) are compositionally biased toward basic and acidic residues. Positions 1002–1039 (HAELSKRYDFLTAQKKDLQSSIEQLKEAIQRIDATSRE) form a coiled coil.

It belongs to the SMC family. Homodimer. Probably forms the Structural Maintenance of Chromosome (SMC) condensin-like complex with ScpA and ScpB.

It is found in the cytoplasm. Its function is as follows. A conditionally essential component of the chromosome segregation machinery. Required for chromosome condensation and partitioning. Important for positioning of ParB-parS complexes (ori of replication) and of the ter replication site, as well as for segration of the ParB-parS complex and thus chromosome segregation. May act via the formation of a condensin-like complex containing Smc, ScpA and ScpB that pulls DNA away from mid-cell into both cell halves. The protein is Chromosome partition protein Smc of Myxococcus xanthus (strain DK1622).